A 251-amino-acid chain; its full sequence is FHA domain-containing protein FHA1 (251 aa).

The FHA domain maps to 32-89 (IILGRNSKKSTVDVDLSSLGGGMNISRNHARIFYDFTRRRFSLEVLGKNGCFVEGVLH). Acidic residues predominate over residues 163 to 174 (EYDDEDDDEEED). The interval 163–209 (EYDDEDDDEEEDIRGSGKKTWRDGHEGVYASGEKKREGRSKADREAD) is disordered. A compositionally biased stretch (basic and acidic residues) spans 182–206 (TWRDGHEGVYASGEKKREGRSKADR).

In terms of tissue distribution, expressed in roots and vascular tissues near the shoot apex in young seedlings.

It localises to the nucleus. Functionally, may play a role in the control of plant organ development. Does not show transactivation activity in yeast. This is FHA domain-containing protein FHA1 from Arabidopsis thaliana (Mouse-ear cress).